Here is a 246-residue protein sequence, read N- to C-terminus: MKQYIVLACMCLVAAAMPTSLQQSSSSCTEEENKHHMGIDVIIKVTKQDQTPTNDKICQSVTEVTETEDDEVSEEVVKGDPTTYYTIVGAGLNMNFGFTKCPKISSISESSDGNTVNTRLSSVSPGQGKDSPAITREEALAMIKDCEMSIDIRCSEEEKDSDIKTHPVLGSNISHKKVSYKDIIGSTIVDTKCVKNLEFSVRIGDMCEESSELEVKDGFKYVDGSASEGATDDTSLIDSTKLKACV.

Residues 108-125 (SESSDGNTVNTRLSSVSP) are compositionally biased toward polar residues. Positions 108 to 132 (SESSDGNTVNTRLSSVSPGQGKDSP) are disordered.

This sequence belongs to the orthopoxvirus OPG001 family.

It is found in the secreted. Functionally, inhibits host immune defense by binding to host chemokines. Binds host CC chemokines (beta chemokines) such as RANTES with high affinity, but not CXC or C chemokines (alpha and gamma chemokines). The polypeptide is Chemokine-binding protein (OPG001) (Monkeypox virus).